The sequence spans 77 residues: Sec-independent protein translocase protein TatA (77 aa).

Residues 1 to 21 (MGSFSIWHWLIVLVIVMLVFG) traverse the membrane as a helical segment. Positions 40–77 (KDGMKEGNTDEPATPTPAKELRDSTTIDVEAKEKSRQQ) are disordered. The segment covering 58–77 (KELRDSTTIDVEAKEKSRQQ) has biased composition (basic and acidic residues).

It belongs to the TatA/E family. In terms of assembly, the Tat system comprises two distinct complexes: a TatABC complex, containing multiple copies of TatA, TatB and TatC subunits, and a separate TatA complex, containing only TatA subunits. Substrates initially bind to the TatABC complex, which probably triggers association of the separate TatA complex to form the active translocon.

Its subcellular location is the cell inner membrane. In terms of biological role, part of the twin-arginine translocation (Tat) system that transports large folded proteins containing a characteristic twin-arginine motif in their signal peptide across membranes. TatA could form the protein-conducting channel of the Tat system. The sequence is that of Sec-independent protein translocase protein TatA from Cupriavidus metallidurans (strain ATCC 43123 / DSM 2839 / NBRC 102507 / CH34) (Ralstonia metallidurans).